The sequence spans 101 residues: NAD(P)H-quinone oxidoreductase subunit 4L, chloroplastic (101 aa).

3 consecutive transmembrane segments (helical) span residues 2-22, 32-52, and 61-81; these read MLEYVLFLSAYLFSIGIYGLI, MCLELILNAVNINLVTFSDLF, and IFSIFVIAIAAAEAAIGPAIV.

It belongs to the complex I subunit 4L family. In terms of assembly, NDH is composed of at least 16 different subunits, 5 of which are encoded in the nucleus.

It is found in the plastid. The protein resides in the chloroplast thylakoid membrane. The catalysed reaction is a plastoquinone + NADH + (n+1) H(+)(in) = a plastoquinol + NAD(+) + n H(+)(out). The enzyme catalyses a plastoquinone + NADPH + (n+1) H(+)(in) = a plastoquinol + NADP(+) + n H(+)(out). Functionally, NDH shuttles electrons from NAD(P)H:plastoquinone, via FMN and iron-sulfur (Fe-S) centers, to quinones in the photosynthetic chain and possibly in a chloroplast respiratory chain. The immediate electron acceptor for the enzyme in this species is believed to be plastoquinone. Couples the redox reaction to proton translocation, and thus conserves the redox energy in a proton gradient. The polypeptide is NAD(P)H-quinone oxidoreductase subunit 4L, chloroplastic (Acorus calamus var. americanus (American sweet flag)).